A 347-amino-acid chain; its full sequence is Phosphate acyltransferase (347 aa).

This sequence belongs to the PlsX family. In terms of assembly, homodimer. Probably interacts with PlsY.

Its subcellular location is the cytoplasm. It carries out the reaction a fatty acyl-[ACP] + phosphate = an acyl phosphate + holo-[ACP]. Its pathway is lipid metabolism; phospholipid metabolism. Its function is as follows. Catalyzes the reversible formation of acyl-phosphate (acyl-PO(4)) from acyl-[acyl-carrier-protein] (acyl-ACP). This enzyme utilizes acyl-ACP as fatty acyl donor, but not acyl-CoA. The protein is Phosphate acyltransferase of Syntrophotalea carbinolica (strain DSM 2380 / NBRC 103641 / GraBd1) (Pelobacter carbinolicus).